Consider the following 774-residue polypeptide: Lysyl oxidase homolog 2 (774 aa).

The signal sequence occupies residues M1–A25. SRCR domains lie at L58 to S159, I188 to V302, V326 to N425, and L435 to S544. 9 disulfides stabilise this stretch: C84–C148, C97–C158, C128–C138, C218–C291, C231–C301, C265–C275, C351–C414, C364–C424, and C395–C405. N-linked (GlcNAc...) asparagine glycosylation occurs at N288. N-linked (GlcNAc...) asparagine glycosylation occurs at N455. 3 disulfide bridges follow: C464/C530, C477/C543, and C511/C521. Positions P548 to S751 are lysyl-oxidase like. Residues D549 and L550 each coordinate Ca(2+). Disulfide bonds link C573–C625, C579–C695, C657–C673, and C663–C685. H626, H628, and H630 together coordinate Cu cation. N644 carries N-linked (GlcNAc...) asparagine glycosylation. A cross-link (lysine tyrosylquinone (Lys-Tyr)) is located at residues K653–Y689. Y689 bears the 2',4',5'-topaquinone mark. Ca(2+) contacts are provided by E722, D724, N727, and N728. C732 and C746 are oxidised to a cystine.

The protein belongs to the lysyl oxidase family. Component of some chromatin repressor complex. Interacts with SNAI1. Interacts with TAF10. Interacts with HSPA5. Interacts with EFEMP2. The cofactor is Cu cation. It depends on lysine tyrosylquinone residue as a cofactor. In terms of processing, the lysine tyrosylquinone cross-link (LTQ) is generated by condensation of the epsilon-amino group of a lysine with a topaquinone produced by oxidation of tyrosine. N-glycosylated. N-glycosylation on Asn-455 and Asn-644 may be essential for proper folding and secretion; may be composed of a fucosylated carbohydrates attached to a trimannose N-linked glycan core.

The protein resides in the secreted. It localises to the extracellular space. The protein localises to the extracellular matrix. It is found in the basement membrane. Its subcellular location is the nucleus. The protein resides in the chromosome. It localises to the endoplasmic reticulum. The catalysed reaction is L-lysyl-[protein] + O2 + H2O = (S)-2-amino-6-oxohexanoyl-[protein] + H2O2 + NH4(+). Its activity is regulated as follows. Specifically inhibited by a mouse monoclonal antibody AB0023, inhibition occurs in a non-competitive manner. Its function is as follows. Mediates the post-translational oxidative deamination of lysine residues on target proteins leading to the formation of deaminated lysine (allysine). Acts as a transcription corepressor and specifically mediates deamination of trimethylated 'Lys-4' of histone H3 (H3K4me3), a specific tag for epigenetic transcriptional activation. Shows no activity against histone H3 when it is trimethylated on 'Lys-9' (H3K9me3) or 'Lys-27' (H3K27me3) or when 'Lys-4' is monomethylated (H3K4me1) or dimethylated (H3K4me2). Also mediates deamination of methylated TAF10, a member of the transcription factor IID (TFIID) complex, which induces release of TAF10 from promoters, leading to inhibition of TFIID-dependent transcription. LOXL2-mediated deamination of TAF10 results in transcriptional repression of genes required for embryonic stem cell pluripotency including POU5F1/OCT4, NANOG, KLF4 and SOX2. Involved in epithelial to mesenchymal transition (EMT) via interaction with SNAI1 and participates in repression of E-cadherin CDH1, probably by mediating deamination of histone H3. During EMT, involved with SNAI1 in negatively regulating pericentromeric heterochromatin transcription. SNAI1 recruits LOXL2 to pericentromeric regions to oxidize histone H3 and repress transcription which leads to release of heterochromatin component CBX5/HP1A, enabling chromatin reorganization and acquisition of mesenchymal traits. Interacts with the endoplasmic reticulum protein HSPA5 which activates the IRE1-XBP1 pathway of the unfolded protein response, leading to expression of several transcription factors involved in EMT and subsequent EMT induction. When secreted into the extracellular matrix, promotes cross-linking of extracellular matrix proteins by mediating oxidative deamination of peptidyl lysine residues in precursors to fibrous collagen and elastin. Acts as a regulator of sprouting angiogenesis, probably via collagen IV scaffolding. Acts as a regulator of chondrocyte differentiation, probably by regulating expression of factors that control chondrocyte differentiation. The polypeptide is Lysyl oxidase homolog 2 (LOXL2) (Pongo abelii (Sumatran orangutan)).